Reading from the N-terminus, the 283-residue chain is Gap junction beta-1 protein (283 aa).

Residues 1 to 22 are Cytoplasmic-facing; it reads MNWTGLYTLLSGVNRHSTAIGR. Residues 23–45 traverse the membrane as a helical segment; it reads VWLSVIFIFRIMVLVVAAESVWG. The Extracellular portion of the chain corresponds to 46-75; it reads DEKSSFICNTLQPGCNSVCYDQFFPISHVR. The chain crosses the membrane as a helical span at residues 76 to 95; sequence LWSLQLILVSTPALLVAMHV. The Cytoplasmic portion of the chain corresponds to 96–130; that stretch reads AHQQHIEKKMLRLEGHGDPLHLEEVKRHKVHISGT. The chain crosses the membrane as a helical span at residues 131 to 153; the sequence is LWWAYVISVVFRLLFEAVFMYVF. The Extracellular portion of the chain corresponds to 154-191; the sequence is YLLYPGYAMVRLVKCDVYPCPNTVDCFVSRPTEKTVFT. The chain crosses the membrane as a helical span at residues 192–214; sequence VFMLAASGICIILNVAEVVYLII. The Cytoplasmic segment spans residues 215 to 283; sequence RACARRAQRR…AEKSDRCSAC (69 aa). Phosphoserine occurs at positions 233, 258, 266, and 277.

Belongs to the connexin family. Beta-type (group I) subfamily. A connexon is composed of a hexamer of connexins. Interacts with CNST.

It is found in the cell membrane. The protein resides in the cell junction. It localises to the gap junction. One gap junction consists of a cluster of closely packed pairs of transmembrane channels, the connexons, through which materials of low MW diffuse from one cell to a neighboring cell. The protein is Gap junction beta-1 protein (GJB1) of Macaca fascicularis (Crab-eating macaque).